The following is a 122-amino-acid chain: S-adenosylmethionine decarboxylase proenzyme (122 aa).

Serine 63 serves as the catalytic Schiff-base intermediate with substrate; via pyruvic acid. Position 63 is a pyruvic acid (Ser); by autocatalysis (serine 63). The active-site Proton acceptor; for processing activity is histidine 68. Cysteine 83 acts as the Proton donor; for catalytic activity in catalysis.

It belongs to the prokaryotic AdoMetDC family. Type 1 subfamily. Heterotetramer of two alpha and two beta chains arranged as a dimer of alpha/beta heterodimers. Pyruvate serves as cofactor. In terms of processing, is synthesized initially as an inactive proenzyme. Formation of the active enzyme involves a self-maturation process in which the active site pyruvoyl group is generated from an internal serine residue via an autocatalytic post-translational modification. Two non-identical subunits are generated from the proenzyme in this reaction, and the pyruvate is formed at the N-terminus of the alpha chain, which is derived from the carboxyl end of the proenzyme. The post-translation cleavage follows an unusual pathway, termed non-hydrolytic serinolysis, in which the side chain hydroxyl group of the serine supplies its oxygen atom to form the C-terminus of the beta chain, while the remainder of the serine residue undergoes an oxidative deamination to produce ammonia and the pyruvoyl group blocking the N-terminus of the alpha chain.

The catalysed reaction is S-adenosyl-L-methionine + H(+) = S-adenosyl 3-(methylsulfanyl)propylamine + CO2. The protein operates within amine and polyamine biosynthesis; S-adenosylmethioninamine biosynthesis; S-adenosylmethioninamine from S-adenosyl-L-methionine: step 1/1. Catalyzes the decarboxylation of S-adenosylmethionine to S-adenosylmethioninamine (dcAdoMet), the propylamine donor required for the synthesis of the polyamines spermine and spermidine from the diamine putrescine. In Methanococcus maripaludis (strain C7 / ATCC BAA-1331), this protein is S-adenosylmethionine decarboxylase proenzyme.